The primary structure comprises 367 residues: Anhydro-N-acetylmuramic acid kinase (367 aa).

11–18 (GTSLDGVD) serves as a coordination point for ATP.

Belongs to the anhydro-N-acetylmuramic acid kinase family.

It carries out the reaction 1,6-anhydro-N-acetyl-beta-muramate + ATP + H2O = N-acetyl-D-muramate 6-phosphate + ADP + H(+). It functions in the pathway amino-sugar metabolism; 1,6-anhydro-N-acetylmuramate degradation. It participates in cell wall biogenesis; peptidoglycan recycling. In terms of biological role, catalyzes the specific phosphorylation of 1,6-anhydro-N-acetylmuramic acid (anhMurNAc) with the simultaneous cleavage of the 1,6-anhydro ring, generating MurNAc-6-P. Is required for the utilization of anhMurNAc either imported from the medium or derived from its own cell wall murein, and thus plays a role in cell wall recycling. This is Anhydro-N-acetylmuramic acid kinase from Chromobacterium violaceum (strain ATCC 12472 / DSM 30191 / JCM 1249 / CCUG 213 / NBRC 12614 / NCIMB 9131 / NCTC 9757 / MK).